A 128-amino-acid polypeptide reads, in one-letter code: Small ribosomal subunit protein uS14m (128 aa).

The protein belongs to the universal ribosomal protein uS14 family. As to quaternary structure, component of the mitochondrial small ribosomal subunit (mt-SSU). Mature mammalian 55S mitochondrial ribosomes consist of a small (28S) and a large (39S) subunit. The 28S small subunit contains a 12S ribosomal RNA (12S mt-rRNA) and 30 different proteins. The 39S large subunit contains a 16S rRNA (16S mt-rRNA), a copy of mitochondrial valine transfer RNA (mt-tRNA(Val)), which plays an integral structural role, and 52 different proteins. Interacts with LIAT1.

The protein resides in the mitochondrion. This Homo sapiens (Human) protein is Small ribosomal subunit protein uS14m.